Consider the following 643-residue polypeptide: 1-deoxy-D-xylulose-5-phosphate synthase (643 aa).

Residues His-79 and 120-122 contribute to the thiamine diphosphate site; that span reads AHA. A Mg(2+)-binding site is contributed by Asp-151. Thiamine diphosphate contacts are provided by residues 152 to 153, Asn-180, Tyr-287, and Glu-369; that span reads GS. Asn-180 serves as a coordination point for Mg(2+).

It belongs to the transketolase family. DXPS subfamily. Homodimer. Mg(2+) is required as a cofactor. It depends on thiamine diphosphate as a cofactor.

It carries out the reaction D-glyceraldehyde 3-phosphate + pyruvate + H(+) = 1-deoxy-D-xylulose 5-phosphate + CO2. It participates in metabolic intermediate biosynthesis; 1-deoxy-D-xylulose 5-phosphate biosynthesis; 1-deoxy-D-xylulose 5-phosphate from D-glyceraldehyde 3-phosphate and pyruvate: step 1/1. In terms of biological role, catalyzes the acyloin condensation reaction between C atoms 2 and 3 of pyruvate and glyceraldehyde 3-phosphate to yield 1-deoxy-D-xylulose-5-phosphate (DXP). The chain is 1-deoxy-D-xylulose-5-phosphate synthase from Maricaulis maris (strain MCS10) (Caulobacter maris).